The following is a 227-amino-acid chain: Cytochrome c oxidase subunit 2 (227 aa).

The Mitochondrial intermembrane portion of the chain corresponds to 1–14; sequence MAHPFQTGLQDATS. Residues 15 to 45 form a helical membrane-spanning segment; the sequence is PIMEELLHFHDHTLMIVFLISSLVLYIISIM. The Mitochondrial matrix segment spans residues 46 to 59; that stretch reads LTTKLTHTNTMDAQ. A helical membrane pass occupies residues 60 to 87; the sequence is EVETVWTILPAIILIMIALPSLRILYMM. At 88 to 227 the chain is on the mitochondrial intermembrane side; it reads DEINNPSLTV…YFEKWSASML (140 aa). H161, C196, E198, C200, H204, and M207 together coordinate Cu cation. A Mg(2+)-binding site is contributed by E198. The residue at position 218 (Y218) is a Phosphotyrosine.

This sequence belongs to the cytochrome c oxidase subunit 2 family. As to quaternary structure, component of the cytochrome c oxidase (complex IV, CIV), a multisubunit enzyme composed of 14 subunits. The complex is composed of a catalytic core of 3 subunits MT-CO1, MT-CO2 and MT-CO3, encoded in the mitochondrial DNA, and 11 supernumerary subunits COX4I, COX5A, COX5B, COX6A, COX6B, COX6C, COX7A, COX7B, COX7C, COX8 and NDUFA4, which are encoded in the nuclear genome. The complex exists as a monomer or a dimer and forms supercomplexes (SCs) in the inner mitochondrial membrane with NADH-ubiquinone oxidoreductase (complex I, CI) and ubiquinol-cytochrome c oxidoreductase (cytochrome b-c1 complex, complex III, CIII), resulting in different assemblies (supercomplex SCI(1)III(2)IV(1) and megacomplex MCI(2)III(2)IV(2)). Found in a complex with TMEM177, COA6, COX18, COX20, SCO1 and SCO2. Interacts with TMEM177 in a COX20-dependent manner. Interacts with COX20. Interacts with COX16. It depends on Cu cation as a cofactor.

The protein localises to the mitochondrion inner membrane. The enzyme catalyses 4 Fe(II)-[cytochrome c] + O2 + 8 H(+)(in) = 4 Fe(III)-[cytochrome c] + 2 H2O + 4 H(+)(out). Component of the cytochrome c oxidase, the last enzyme in the mitochondrial electron transport chain which drives oxidative phosphorylation. The respiratory chain contains 3 multisubunit complexes succinate dehydrogenase (complex II, CII), ubiquinol-cytochrome c oxidoreductase (cytochrome b-c1 complex, complex III, CIII) and cytochrome c oxidase (complex IV, CIV), that cooperate to transfer electrons derived from NADH and succinate to molecular oxygen, creating an electrochemical gradient over the inner membrane that drives transmembrane transport and the ATP synthase. Cytochrome c oxidase is the component of the respiratory chain that catalyzes the reduction of oxygen to water. Electrons originating from reduced cytochrome c in the intermembrane space (IMS) are transferred via the dinuclear copper A center (CU(A)) of subunit 2 and heme A of subunit 1 to the active site in subunit 1, a binuclear center (BNC) formed by heme A3 and copper B (CU(B)). The BNC reduces molecular oxygen to 2 water molecules using 4 electrons from cytochrome c in the IMS and 4 protons from the mitochondrial matrix. This Ailuropoda melanoleuca (Giant panda) protein is Cytochrome c oxidase subunit 2 (MT-CO2).